An 89-amino-acid polypeptide reads, in one-letter code: Small ribosomal subunit protein uS15 (89 aa).

Residues 1–21 (MVMTAEDKAQVIGEHKKHDGD) are compositionally biased toward basic and acidic residues. The interval 1-24 (MVMTAEDKAQVIGEHKKHDGDTGS) is disordered.

This sequence belongs to the universal ribosomal protein uS15 family. As to quaternary structure, part of the 30S ribosomal subunit. Forms a bridge to the 50S subunit in the 70S ribosome, contacting the 23S rRNA.

Functionally, one of the primary rRNA binding proteins, it binds directly to 16S rRNA where it helps nucleate assembly of the platform of the 30S subunit by binding and bridging several RNA helices of the 16S rRNA. Forms an intersubunit bridge (bridge B4) with the 23S rRNA of the 50S subunit in the ribosome. The polypeptide is Small ribosomal subunit protein uS15 (Solidesulfovibrio magneticus (strain ATCC 700980 / DSM 13731 / RS-1) (Desulfovibrio magneticus)).